The primary structure comprises 513 residues: Probable DNA ligase (513 aa).

Residue glutamate 213 coordinates ATP. Lysine 215 functions as the N6-AMP-lysine intermediate in the catalytic mechanism. Residues arginine 220, arginine 235, glutamate 264, phenylalanine 304, arginine 376, and lysine 382 each coordinate ATP.

This sequence belongs to the ATP-dependent DNA ligase family. Mg(2+) is required as a cofactor.

It catalyses the reaction ATP + (deoxyribonucleotide)n-3'-hydroxyl + 5'-phospho-(deoxyribonucleotide)m = (deoxyribonucleotide)n+m + AMP + diphosphate.. Its function is as follows. DNA ligase that seals nicks in double-stranded DNA during DNA replication, DNA recombination and DNA repair. This Anaeromyxobacter dehalogenans (strain 2CP-1 / ATCC BAA-258) protein is Probable DNA ligase.